The primary structure comprises 334 residues: MSEFLTPERTVYDSGVQFLRPKSLDEFIGQENVKKKLSLALEAAKMRGEVLDHVLLAGPPGLGKTTLAHIIASELQTNIHVTSGPVLVKQGDMAAILTSLERGDVLFIDEIHRLNKAVEELLYSAIEDFQIDIMIGKGPSAKSIRIDIQPFTLVGATTRSGLLSSPLRSRFGIILELDFYTVKELKEIIKRAASLMDVEIEDSAAEMIAKRSRGTPRIAIRLTKRVRDMLTVVKADRINTDIVLKTMEVLNIDAEGLDEFDRKILKTIIEIYRGGPVGLNALAASLGVEADTLSEVYEPYLLQAGFLARTPRGRVATEKAYKHLKYEVPENRLF.

The large ATPase domain (RuvB-L) stretch occupies residues 1–180; sequence MSEFLTPERT…FGIILELDFY (180 aa). ATP contacts are provided by residues Leu19, Arg20, Gly61, Lys64, Thr65, Thr66, 127–129, Arg170, Tyr180, and Arg217; that span reads EDF. Position 65 (Thr65) interacts with Mg(2+). Residues 181-251 form a small ATPAse domain (RuvB-S) region; the sequence is TVKELKEIIK…IVLKTMEVLN (71 aa). Residues 254–334 are head domain (RuvB-H); it reads AEGLDEFDRK…KYEVPENRLF (81 aa). Positions 309 and 314 each coordinate DNA.

This sequence belongs to the RuvB family. Homohexamer. Forms an RuvA(8)-RuvB(12)-Holliday junction (HJ) complex. HJ DNA is sandwiched between 2 RuvA tetramers; dsDNA enters through RuvA and exits via RuvB. An RuvB hexamer assembles on each DNA strand where it exits the tetramer. Each RuvB hexamer is contacted by two RuvA subunits (via domain III) on 2 adjacent RuvB subunits; this complex drives branch migration. In the full resolvosome a probable DNA-RuvA(4)-RuvB(12)-RuvC(2) complex forms which resolves the HJ.

It is found in the cytoplasm. The catalysed reaction is ATP + H2O = ADP + phosphate + H(+). Its function is as follows. The RuvA-RuvB-RuvC complex processes Holliday junction (HJ) DNA during genetic recombination and DNA repair, while the RuvA-RuvB complex plays an important role in the rescue of blocked DNA replication forks via replication fork reversal (RFR). RuvA specifically binds to HJ cruciform DNA, conferring on it an open structure. The RuvB hexamer acts as an ATP-dependent pump, pulling dsDNA into and through the RuvAB complex. RuvB forms 2 homohexamers on either side of HJ DNA bound by 1 or 2 RuvA tetramers; 4 subunits per hexamer contact DNA at a time. Coordinated motions by a converter formed by DNA-disengaged RuvB subunits stimulates ATP hydrolysis and nucleotide exchange. Immobilization of the converter enables RuvB to convert the ATP-contained energy into a lever motion, pulling 2 nucleotides of DNA out of the RuvA tetramer per ATP hydrolyzed, thus driving DNA branch migration. The RuvB motors rotate together with the DNA substrate, which together with the progressing nucleotide cycle form the mechanistic basis for DNA recombination by continuous HJ branch migration. Branch migration allows RuvC to scan DNA until it finds its consensus sequence, where it cleaves and resolves cruciform DNA. The polypeptide is Holliday junction branch migration complex subunit RuvB (Thermotoga petrophila (strain ATCC BAA-488 / DSM 13995 / JCM 10881 / RKU-1)).